Consider the following 185-residue polypeptide: Elongation factor P (185 aa).

The protein belongs to the elongation factor P family.

Its subcellular location is the cytoplasm. The protein operates within protein biosynthesis; polypeptide chain elongation. Functionally, involved in peptide bond synthesis. Stimulates efficient translation and peptide-bond synthesis on native or reconstituted 70S ribosomes in vitro. Probably functions indirectly by altering the affinity of the ribosome for aminoacyl-tRNA, thus increasing their reactivity as acceptors for peptidyl transferase. The chain is Elongation factor P from Limosilactobacillus reuteri (strain DSM 20016) (Lactobacillus reuteri).